Consider the following 395-residue polypeptide: E3 ubiquitin-protein ligase RDUF1 (395 aa).

2 disordered regions span residues 1–22 and 107–130; these read MMPN…TTTT and PVIV…EGDG. Residues 9 to 22 show a composition bias toward low complexity; it reads TITPTTESTTTTTT. A compositionally biased stretch (basic and acidic residues) spans 121 to 130; it reads ERVENEEGDG. Residues 215–256 form an RING-type; atypical zinc finger; sequence CAVCTEVFEAGIEGREMPCKHIFHGDCIVPWLSIRNSCPVCR.

In terms of tissue distribution, expressed in root tips, leaf tips, junction of carpels and pedicels, stigma, anthers, pollen, vasculature of sepals and petals, immature seeds and embryos.

The protein resides in the cytoplasm. Its subcellular location is the cytosol. It localises to the nucleus. It catalyses the reaction S-ubiquitinyl-[E2 ubiquitin-conjugating enzyme]-L-cysteine + [acceptor protein]-L-lysine = [E2 ubiquitin-conjugating enzyme]-L-cysteine + N(6)-ubiquitinyl-[acceptor protein]-L-lysine.. It participates in protein modification; protein ubiquitination. Functionally, E3 ubiquitin-protein ligase involved in the positive regulation of abscisic acid-dependent drought stress responses. Involved in the positive regulation of responses to salt and osmotic stresses during seed germination and early seedling development. Possesses E3 ubiquitin ligase activity in vitro. This Arabidopsis thaliana (Mouse-ear cress) protein is E3 ubiquitin-protein ligase RDUF1.